An 898-amino-acid chain; its full sequence is Translation initiation factor IF-2 (898 aa).

2 disordered regions span residues 51–70 and 114–303; these read RKSHGAEDEGSGKKITLKRK and LAAE…KQHG. 2 stretches are compositionally biased toward basic and acidic residues: residues 114 to 171 and 184 to 258; these read LAAE…EKSK and PAKE…DDKG. The 170-residue stretch at 398–567 folds into the tr-type G domain; it reads HRAPVVTIMG…LLQSELLELQ (170 aa). The segment at 407–414 is G1; that stretch reads GHVDHGKT. Position 407-414 (407-414) interacts with GTP; it reads GHVDHGKT. A G2 region spans residues 432-436; the sequence is GITQH. Positions 453 to 456 are G3; sequence DTPG. GTP contacts are provided by residues 453 to 457 and 507 to 510; these read DTPGH and NKID. The G4 stretch occupies residues 507-510; sequence NKID. Residues 543–545 are G5; it reads SAH.

It belongs to the TRAFAC class translation factor GTPase superfamily. Classic translation factor GTPase family. IF-2 subfamily.

Its subcellular location is the cytoplasm. One of the essential components for the initiation of protein synthesis. Protects formylmethionyl-tRNA from spontaneous hydrolysis and promotes its binding to the 30S ribosomal subunits. Also involved in the hydrolysis of GTP during the formation of the 70S ribosomal complex. The sequence is that of Translation initiation factor IF-2 from Alcanivorax borkumensis (strain ATCC 700651 / DSM 11573 / NCIMB 13689 / SK2).